Reading from the N-terminus, the 150-residue chain is Large ribosomal subunit protein bL9 (150 aa).

This sequence belongs to the bacterial ribosomal protein bL9 family.

Binds to the 23S rRNA. The chain is Large ribosomal subunit protein bL9 from Halorhodospira halophila (strain DSM 244 / SL1) (Ectothiorhodospira halophila (strain DSM 244 / SL1)).